We begin with the raw amino-acid sequence, 162 residues long: Autophagy-related protein 8 (162 aa).

A compositionally biased stretch (basic and acidic residues) spans 1-27 (MRSKFKDEHPFEKRKAEAERIRQKYSD). Positions 1–42 (MRSKFKDEHPFEKRKAEAERIRQKYSDRIPPSPHSPASRLIG) are disordered. Glycine 157 carries the Phosphatidylethanolamine amidated glycine lipid modification. Positions 158-162 (GFETA) are cleaved as a propeptide — removed in mature form.

The protein belongs to the ATG8 family.

The protein localises to the cytoplasmic vesicle. Its subcellular location is the autophagosome membrane. It is found in the vacuole membrane. Ubiquitin-like modifier involved in autophagosome formation. With ATG4, mediates the delivery of the autophagosomes to the vacuole via the microtubule cytoskeleton. Required for selective autophagic degradation of the nucleus (nucleophagy) as well as for mitophagy which contributes to regulate mitochondrial quantity and quality by eliminating the mitochondria to a basal level to fulfill cellular energy requirements and preventing excess ROS production. Also participates in membrane fusion events that take place in the early secretory pathway. Also involved in endoplasmic reticulum-specific autophagic process and is essential for the survival of cells subjected to severe ER stress. The ATG8-PE conjugate mediates tethering between adjacent membranes and stimulates membrane hemifusion, leading to expansion of the autophagosomal membrane during autophagy. The protein is Autophagy-related protein 8 of Colletotrichum higginsianum (strain IMI 349063) (Crucifer anthracnose fungus).